Consider the following 551-residue polypeptide: Periplasmic [NiFe] hydrogenase large subunit (551 aa).

Ni(2+) is bound by residues C65, C68, C530, and C533. Residues 537–551 (VIDPESNQVHKFRIL) constitute a propeptide that is removed on maturation.

It belongs to the [NiFe]/[NiFeSe] hydrogenase large subunit family. In terms of assembly, heterodimer of a large and a small subunit. Ni(2+) serves as cofactor.

It is found in the periplasm. The catalysed reaction is 2 Fe(III)-[cytochrome c3] + H2 = 2 Fe(II)-[cytochrome c3] + 2 H(+). The polypeptide is Periplasmic [NiFe] hydrogenase large subunit (hydB) (Megalodesulfovibrio gigas (Desulfovibrio gigas)).